Here is an 853-residue protein sequence, read N- to C-terminus: Replication protein A 70 kDa DNA-binding subunit C (853 aa).

The disordered stretch occupies residues 118-282 (PKEPGHSSIN…QSAYQPQQPP (165 aa)). 6 stretches are compositionally biased toward polar residues: residues 124–144 (SSIN…SEQQ), 159–173 (SANS…NSSD), 180–194 (SANS…SSSD), 201–211 (SANSPQRQVVH), 222–249 (PQVS…SSNA), and 263–278 (TATT…AYQP). A DNA-binding region (OB) is located at residues 312–399 (WTIKVRVTSK…NDYEIHLDSA (88 aa)). The segment at 602-628 (CPIMNGDRPCSKKVTNNGDGTWRCEKC) adopts a C4-type zinc-finger fold.

The protein belongs to the replication factor A protein 1 family. In terms of assembly, heterotrimer of RPA1, RPA2 and RPA3 (canonical replication protein A complex).

It localises to the nucleus. Its function is as follows. Component of the replication protein A complex (RPA) required for DNA recombination, repair and replication. The activity of RPA is mediated by single-stranded DNA binding and protein interactions. Probably involved in repair of double-strand DNA breaks (DSBs) induced by genotoxic stresses. In Arabidopsis thaliana (Mouse-ear cress), this protein is Replication protein A 70 kDa DNA-binding subunit C (RPA1C).